The chain runs to 160 residues: Cytochrome b6-f complex subunit 4 (160 aa).

The next 3 membrane-spanning stretches (helical) occupy residues 36-56 (LLYVFPIVIMGSFAAIVALAV), 95-115 (LLGVLAMGSVPVGLILVPFIE), and 131-151 (TVFLVGTLVTVWLGIGAALPL).

Belongs to the cytochrome b family. PetD subfamily. The 4 large subunits of the cytochrome b6-f complex are cytochrome b6, subunit IV (17 kDa polypeptide, PetD), cytochrome f and the Rieske protein, while the 4 small subunits are PetG, PetL, PetM and PetN. The complex functions as a dimer.

The protein localises to the cellular thylakoid membrane. Its function is as follows. Component of the cytochrome b6-f complex, which mediates electron transfer between photosystem II (PSII) and photosystem I (PSI), cyclic electron flow around PSI, and state transitions. This is Cytochrome b6-f complex subunit 4 from Nostoc punctiforme (strain ATCC 29133 / PCC 73102).